The following is a 2245-amino-acid chain: Basic helix-loop-helix domain-containing protein USF3 (2245 aa).

The disordered stretch occupies residues 1–28 (MPEMTENETPTKKQHRKKNRETHNAVER). The bHLH domain occupies 18 to 69 (KNRETHNAVERHRKKKINAGINRIGELIPCSPALKQSKNMILDQAFKYITEL). Residues 77–112 (LLNGGNNEQAEEIKKLRKQLEEIQKENGRYIELLKA) are a coiled coil. 13 disordered regions span residues 271 to 290 (LHTC…QENP), 447 to 470 (SQTP…TSNH), 881 to 900 (SKSK…VTSE), 906 to 933 (AAKS…ALSD), 1015 to 1041 (KNPQ…IVDS), 1164 to 1238 (PSEA…SITS), 1307 to 1331 (IPNS…AKRA), 1460 to 1624 (IKQQ…VSGH), 1636 to 1664 (LEQQ…ERNR), 1736 to 1764 (TFKP…GNPV), 1777 to 1815 (ISQN…ENTC), 1834 to 1859 (GSQR…YNCP), and 1891 to 2031 (STLN…QPAT). Positions 273–288 (TCLNDQNSSENKNGQE) are enriched in polar residues. Positions 881–896 (SKSKSAEKSSPPSQES) are enriched in low complexity. Polar residues predominate over residues 912 to 925 (STPNLQQETSQDKP). Composition is skewed to polar residues over residues 1185-1202 (GTGQ…QGSI) and 1219-1238 (IKTS…SITS). Over residues 1319-1331 (PSHESRKDSAKRA) the composition is skewed to basic and acidic residues. Residues 1462-1478 (QQQQQQQQQQQQQQQQQ) show a composition bias toward low complexity. 2 stretches are compositionally biased toward polar residues: residues 1501–1520 (SVHS…QEVQ) and 1528–1538 (VQGTQTSQLSL). Positions 1560-1569 (QQMQQQMQQH) are enriched in low complexity. Over residues 1570–1585 (FGSSQTEKSCENPSTS) the composition is skewed to polar residues. A compositionally biased stretch (low complexity) spans 1593 to 1624 (QNHLNQDIMHQQQDVGSRQQGSGVSSEHVSGH). Positions 1636–1654 (LEQQMVSQPSIVTRSSDMT) are enriched in polar residues. 2 stretches are compositionally biased toward polar residues: residues 1904–1923 (GDIQ…SNPM) and 1998–2007 (SGNQRQSTVF).

It localises to the nucleus. In terms of biological role, involved in the negative regulation of epithelial-mesenchymal transition, the process by which epithelial cells lose their polarity and adhesion properties to become mesenchymal cells with enhanced migration and invasive properties. This chain is Basic helix-loop-helix domain-containing protein USF3, found in Homo sapiens (Human).